The chain runs to 344 residues: L-rhamnose-proton symporter (344 aa).

The next 10 helical transmembrane spans lie at 4 to 24 (AITM…CFYA), 38 to 58 (WSVG…AILL), 72 to 92 (TLLP…NYGL), 101 to 121 (MGIG…TPIL), 137 to 157 (TLLG…AGQL), 175 to 195 (LVLA…MNAA), 214 to 234 (LPSY…FCFI), 259 to 279 (VLLS…YAWG), 290 to 310 (MSWM…GLVL), and 321 to 341 (VGVL…VGLG).

It belongs to the L-rhamnose transporter (TC 2.A.7.6) family.

The protein localises to the cell inner membrane. It carries out the reaction L-rhamnopyranose(in) + H(+)(in) = L-rhamnopyranose(out) + H(+)(out). Its function is as follows. Uptake of L-rhamnose across the cytoplasmic membrane with the concomitant transport of protons into the cell (symport system). In Enterobacter sp. (strain 638), this protein is L-rhamnose-proton symporter.